The primary structure comprises 272 residues: 3-methyl-2-oxobutanoate hydroxymethyltransferase (272 aa).

Aspartate 43 and aspartate 82 together coordinate Mg(2+). 3-methyl-2-oxobutanoate is bound by residues 43 to 44 (DS), aspartate 82, and lysine 112. Glutamate 114 is a binding site for Mg(2+). The active-site Proton acceptor is the glutamate 179.

It belongs to the PanB family. Homodecamer; pentamer of dimers. Mg(2+) serves as cofactor.

It localises to the cytoplasm. The enzyme catalyses 3-methyl-2-oxobutanoate + (6R)-5,10-methylene-5,6,7,8-tetrahydrofolate + H2O = 2-dehydropantoate + (6S)-5,6,7,8-tetrahydrofolate. It participates in cofactor biosynthesis; (R)-pantothenate biosynthesis; (R)-pantoate from 3-methyl-2-oxobutanoate: step 1/2. Functionally, catalyzes the reversible reaction in which hydroxymethyl group from 5,10-methylenetetrahydrofolate is transferred onto alpha-ketoisovalerate to form ketopantoate. The sequence is that of 3-methyl-2-oxobutanoate hydroxymethyltransferase from Staphylococcus aureus (strain bovine RF122 / ET3-1).